A 293-amino-acid chain; its full sequence is uncharacterized protein (293 aa).

Disordered regions lie at residues 1-23 (MGWP…AQTD) and 52-83 (ELQS…SELS). Residues 8-17 (KPEDSKEEHG) are compositionally biased toward basic and acidic residues. Polar residues predominate over residues 52 to 71 (ELQSYSHTSESPVETKTPTT).

This is an uncharacterized protein from Mus musculus (Mouse).